Here is a 550-residue protein sequence, read N- to C-terminus: Warthog protein 8 (550 aa).

The signal sequence occupies residues 1–19 (MNYLLLVSGLLSVWQPVFG).

The protein belongs to the hedgehog family. Post-translationally, the C-terminal domain displays an autoproteolysis activity.

It is found in the secreted. The protein resides in the cell surface. The protein localises to the cell membrane. It localises to the extracellular space. Its function is as follows. Intercellular signal essential for a variety of patterning events during development. The polypeptide is Warthog protein 8 (wrt-8) (Caenorhabditis elegans).